Reading from the N-terminus, the 450-residue chain is Tubulin alpha-3 chain (450 aa).

Residue glutamine 11 participates in GTP binding. Lysine 40 carries the N6-acetyllysine modification. Positions 71, 144, 145, 179, 206, and 228 each coordinate GTP. Glutamate 71 serves as a coordination point for Mg(2+). Residue glutamate 254 is part of the active site.

Belongs to the tubulin family. In terms of assembly, dimer of alpha and beta chains. A typical microtubule is a hollow water-filled tube with an outer diameter of 25 nm and an inner diameter of 15 nM. Alpha-beta heterodimers associate head-to-tail to form protofilaments running lengthwise along the microtubule wall with the beta-tubulin subunit facing the microtubule plus end conferring a structural polarity. Microtubules usually have 13 protofilaments but different protofilament numbers can be found in some organisms and specialized cells. Requires Mg(2+) as cofactor. Undergoes a tyrosination/detyrosination cycle, the cyclic removal and re-addition of a C-terminal tyrosine residue by the enzymes tubulin tyrosine carboxypeptidase (TTCP) and tubulin tyrosine ligase (TTL), respectively. Post-translationally, acetylation of alpha chains at Lys-40 stabilizes microtubules and affects affinity and processivity of microtubule motors. This modification has a role in multiple cellular functions, ranging from cell motility, cell cycle progression or cell differentiation to intracellular trafficking and signaling.

It is found in the cytoplasm. Its subcellular location is the cytoskeleton. It carries out the reaction GTP + H2O = GDP + phosphate + H(+). Functionally, tubulin is the major constituent of microtubules, a cylinder consisting of laterally associated linear protofilaments composed of alpha- and beta-tubulin heterodimers. Microtubules grow by the addition of GTP-tubulin dimers to the microtubule end, where a stabilizing cap forms. Below the cap, tubulin dimers are in GDP-bound state, owing to GTPase activity of alpha-tubulin. The chain is Tubulin alpha-3 chain (TUBA3) from Zea mays (Maize).